The chain runs to 548 residues: Chaperonin GroEL (548 aa).

Residues 29 to 32 (TLGP), lysine 50, 86 to 90 (DGTTT), glycine 414, 478 to 480 (NAA), and aspartate 494 contribute to the ATP site.

It belongs to the chaperonin (HSP60) family. As to quaternary structure, forms a cylinder of 14 subunits composed of two heptameric rings stacked back-to-back. Interacts with the co-chaperonin GroES.

The protein localises to the cytoplasm. The catalysed reaction is ATP + H2O + a folded polypeptide = ADP + phosphate + an unfolded polypeptide.. In terms of biological role, together with its co-chaperonin GroES, plays an essential role in assisting protein folding. The GroEL-GroES system forms a nano-cage that allows encapsulation of the non-native substrate proteins and provides a physical environment optimized to promote and accelerate protein folding. The protein is Chaperonin GroEL of Psychrobacter sp. (strain PRwf-1).